We begin with the raw amino-acid sequence, 103 residues long: Integration host factor subunit beta (103 aa).

The tract at residues 59-82 (RLGRNPKTGESVALPGKHVPHFKP) is disordered.

It belongs to the bacterial histone-like protein family. In terms of assembly, heterodimer of an alpha and a beta chain.

Its function is as follows. This protein is one of the two subunits of integration host factor, a specific DNA-binding protein that functions in genetic recombination as well as in transcriptional and translational control. This chain is Integration host factor subunit beta, found in Xanthomonas oryzae pv. oryzae (strain MAFF 311018).